The sequence spans 388 residues: MNLHEYQAKALLKKYGVSVQEGILARSAEEAVAAFEQLGGKFAVIKAQVHAGGRGKAGGVKVVKSKEEAADYANQLIGTNLVTYQTDANGQPVNSVLVCEDVYPVERELYLGAVVDRSSRRVTFMASTEGGVEIEKVAEETPEKIIKVEVDPLVGLQPFQAREVAFALGLKDKQIGQFVKLMAGAYQAFVENDFALFEINPLSVRENGDILAVDAKIGIDSNALYRLPEIAASRDKSQENERELKASEFELNYVALEGNIGCMVNGAGLAMATMDIIKLYGGQPANFLDVGGGATKERVIEAFKLILADTSVQGVLINIFGGIVRCDMIAEAIIAAVQEVNVTVPVVVRLEGNNAELGAKILDESGLKLTSANGLSDAAEKIVAAVKG.

The ATP-grasp domain maps to 9–245 (KALLKKYGVS…KSQENERELK (237 aa)). ATP contacts are provided by residues Lys46, 53–55 (GRG), Glu100, Tyr103, and Glu108. Mg(2+)-binding residues include Asn200 and Asp214. Residues Asn265 and 322–324 (GIV) each bind substrate.

The protein belongs to the succinate/malate CoA ligase beta subunit family. In terms of assembly, heterotetramer of two alpha and two beta subunits. Mg(2+) is required as a cofactor.

The catalysed reaction is succinate + ATP + CoA = succinyl-CoA + ADP + phosphate. It catalyses the reaction GTP + succinate + CoA = succinyl-CoA + GDP + phosphate. It functions in the pathway carbohydrate metabolism; tricarboxylic acid cycle; succinate from succinyl-CoA (ligase route): step 1/1. Its function is as follows. Succinyl-CoA synthetase functions in the citric acid cycle (TCA), coupling the hydrolysis of succinyl-CoA to the synthesis of either ATP or GTP and thus represents the only step of substrate-level phosphorylation in the TCA. The beta subunit provides nucleotide specificity of the enzyme and binds the substrate succinate, while the binding sites for coenzyme A and phosphate are found in the alpha subunit. The sequence is that of Succinate--CoA ligase [ADP-forming] subunit beta from Acinetobacter baylyi (strain ATCC 33305 / BD413 / ADP1).